Reading from the N-terminus, the 115-residue chain is Large ribosomal subunit protein eL36 (115 aa).

The protein belongs to the eukaryotic ribosomal protein eL36 family. Component of the large ribosomal subunit.

Its subcellular location is the cytoplasm. It localises to the cytosol. Functionally, component of the large ribosomal subunit. The protein is Large ribosomal subunit protein eL36 (RpL36) of Drosophila melanogaster (Fruit fly).